Here is a 195-residue protein sequence, read N- to C-terminus: Probable WRKY transcription factor 56 (195 aa).

The span at 1–10 (MEGVDNTNPM) shows a compositional bias: polar residues. Disordered regions lie at residues 1–20 (MEGV…ENNN) and 70–93 (EMGG…KGKG). The WRKY DNA-binding region spans 108–173 (SDDDVLDDGY…YEGVHNHPCE (66 aa)).

This sequence belongs to the WRKY group II-c family.

The protein resides in the nucleus. Functionally, transcription factor. Interacts specifically with the W box (5'-(T)TGAC[CT]-3'), a frequently occurring elicitor-responsive cis-acting element. In Arabidopsis thaliana (Mouse-ear cress), this protein is Probable WRKY transcription factor 56 (WRKY56).